The primary structure comprises 365 residues: Phosphatidylcholine:ceramide cholinephosphotransferase 4 (365 aa).

At 1 to 44 the chain is on the cytoplasmic side; it reads MISYPFFSLSPPGLVPPPMAVPPVEMYSGSFWNRMRKPLPLRTQ. A helical transmembrane segment spans residues 45–65; that stretch reads VIRFTVVFVIVSFILAVALQI. The Lumenal segment spans residues 66–92; that stretch reads THERMPDPKVTKPLPDLGFELLTKVPG. The helical transmembrane segment at 93–113 threads the bilayer; sequence MYVLADCCIGFLNILSVFTAF. Over 114-165 the chain is Cytoplasmic; that stretch reads KLYLLHRHCVGSGEPELPCNIPGVSRFFLSVWLCKENCRIELRNVHTIAWIR. A helical membrane pass occupies residues 166 to 186; sequence FITSYALLLLFRSVVIVMTSL. Residues 187-229 lie on the Lumenal side of the membrane; sequence PAPDDLCQDPPKIENPVKNVILTVLTAGGGSIHCGDLMYSGHT. The active site involves His228. A helical membrane pass occupies residues 230 to 250; sequence VILTLHLMFHWIYGAMVHWSF. Arg251 is a topological domain (cytoplasmic). Residues 252 to 272 traverse the membrane as a helical segment; sequence PVVTVVAIFGYYCIVASRFHY. Active-site residues include His271 and Asp275. The Lumenal segment spans residues 273–275; it reads TDD. The chain crosses the membrane as a helical span at residues 276 to 296; the sequence is VLVAIYLTIATFIAVGHNADG. Residues 297-365 lie on the Cytoplasmic side of the membrane; the sequence is APWQLQLFIR…ALMFKCGAYV (69 aa).

The protein belongs to the sphingomyelin synthase family.

It is found in the golgi apparatus membrane. It carries out the reaction an N-acylsphing-4-enine + a 1,2-diacyl-sn-glycero-3-phosphocholine = a sphingomyelin + a 1,2-diacyl-sn-glycerol. Functionally, bidirectional lipid cholinephosphotransferase capable of converting phosphatidylcholine (PC) and ceramide to sphingomyelin (SM) and diacylglycerol (DAG) and vice versa. Direction is dependent on the relative concentrations of DAG and ceramide as phosphocholine acceptors. Directly and specifically recognizes the choline head group on the substrate. Also requires two fatty chains on the choline-P donor molecule in order to be recognized efficiently as a substrate. Does not function strictly as a SM synthase. Essential for viability of the pathogenic bloodstream stage of this human protozoan parasite and, consequently, can be considered as potential drug target. The sequence is that of Phosphatidylcholine:ceramide cholinephosphotransferase 4 from Trypanosoma brucei brucei (strain 927/4 GUTat10.1).